The primary structure comprises 161 residues: Cap-associated protein CAF20 (161 aa).

Residues 52–72 are compositionally biased toward basic residues; that stretch reads HFGRRRSSHHHGRPKIKHNKP. The tract at residues 52 to 108 is disordered; the sequence is HFGRRRSSHHHGRPKIKHNKPKVTTDSDGWCTFEAKKKGSGEDDEEETETTPTSTVP. 2 positions are modified to phosphoserine: S78 and S91. Phosphothreonine is present on residues T99, T101, and T102. The residue at position 154 (S154) is a Phosphoserine.

Belongs to the CAF20 family. As to quaternary structure, interacts with TIF45. Phosphorylated by casein kinase II complex (CK2).

It is found in the cytoplasm. Acts as an inhibitor of cap-dependent translation. Competes with eIF4G1/TIF4631 and EAP1 for binding to eIF4E/TIF45 and interferes with the formation of the eIF4F complex, inhibiting translation and stabilizing mRNA. Binding affinity for eIF4E/TIF45 is 10-fold less than that of eIF4G1/TIF4631. Required for induction of pseudohyphal growth in response to nitrogen limitation, probably by regulating STE12 translation. This chain is Cap-associated protein CAF20 (CAF20), found in Saccharomyces cerevisiae (strain YJM789) (Baker's yeast).